The following is a 308-amino-acid chain: ATP synthase gamma chain (308 aa).

It belongs to the ATPase gamma chain family. In terms of assembly, F-type ATPases have 2 components, CF(1) - the catalytic core - and CF(0) - the membrane proton channel. CF(1) has five subunits: alpha(3), beta(3), gamma(1), delta(1), epsilon(1). CF(0) has three main subunits: a, b and c.

It localises to the cell membrane. Functionally, produces ATP from ADP in the presence of a proton gradient across the membrane. The gamma chain is believed to be important in regulating ATPase activity and the flow of protons through the CF(0) complex. The protein is ATP synthase gamma chain of Lacticaseibacillus paracasei (strain ATCC 334 / BCRC 17002 / CCUG 31169 / CIP 107868 / KCTC 3260 / NRRL B-441) (Lactobacillus paracasei).